Consider the following 259-residue polypeptide: Thiazole synthase (259 aa).

Lys-98 serves as the catalytic Schiff-base intermediate with DXP. 1-deoxy-D-xylulose 5-phosphate contacts are provided by residues Gly-159, 185 to 186 (AG), and 207 to 208 (NS).

This sequence belongs to the ThiG family. As to quaternary structure, homotetramer. Forms heterodimers with either ThiH or ThiS.

It is found in the cytoplasm. It catalyses the reaction [ThiS sulfur-carrier protein]-C-terminal-Gly-aminoethanethioate + 2-iminoacetate + 1-deoxy-D-xylulose 5-phosphate = [ThiS sulfur-carrier protein]-C-terminal Gly-Gly + 2-[(2R,5Z)-2-carboxy-4-methylthiazol-5(2H)-ylidene]ethyl phosphate + 2 H2O + H(+). The protein operates within cofactor biosynthesis; thiamine diphosphate biosynthesis. Its function is as follows. Catalyzes the rearrangement of 1-deoxy-D-xylulose 5-phosphate (DXP) to produce the thiazole phosphate moiety of thiamine. Sulfur is provided by the thiocarboxylate moiety of the carrier protein ThiS. In vitro, sulfur can be provided by H(2)S. The sequence is that of Thiazole synthase from Chlorobium phaeobacteroides (strain DSM 266 / SMG 266 / 2430).